A 144-amino-acid chain; its full sequence is 3-hydroxyacyl-[acyl-carrier-protein] dehydratase FabZ (144 aa).

Residue His-49 is part of the active site.

This sequence belongs to the thioester dehydratase family. FabZ subfamily.

The protein localises to the cytoplasm. The enzyme catalyses a (3R)-hydroxyacyl-[ACP] = a (2E)-enoyl-[ACP] + H2O. Functionally, involved in unsaturated fatty acids biosynthesis. Catalyzes the dehydration of short chain beta-hydroxyacyl-ACPs and long chain saturated and unsaturated beta-hydroxyacyl-ACPs. This Clostridium kluyveri (strain NBRC 12016) protein is 3-hydroxyacyl-[acyl-carrier-protein] dehydratase FabZ.